The primary structure comprises 267 residues: Tryptophan synthase alpha chain (267 aa).

Residues glutamate 47 and aspartate 58 each act as proton acceptor in the active site.

It belongs to the TrpA family. Tetramer of two alpha and two beta chains.

The enzyme catalyses (1S,2R)-1-C-(indol-3-yl)glycerol 3-phosphate + L-serine = D-glyceraldehyde 3-phosphate + L-tryptophan + H2O. It functions in the pathway amino-acid biosynthesis; L-tryptophan biosynthesis; L-tryptophan from chorismate: step 5/5. Functionally, the alpha subunit is responsible for the aldol cleavage of indoleglycerol phosphate to indole and glyceraldehyde 3-phosphate. In Chlorobium chlorochromatii (strain CaD3), this protein is Tryptophan synthase alpha chain.